A 219-amino-acid polypeptide reads, in one-letter code: Steroid receptor RNA activator 1 (219 aa).

Disordered regions lie at residues 1-90 (MAEL…SSPV) and 192-219 (SLSSEENKEEKSTVAPENQTIPGFQPSS). The segment covering 23–32 (YGLQTQTGGT) has biased composition (polar residues). Position 48 is a phosphoserine (serine 48). Residues 55–76 (SGPPPVDHPPPSSKASRPPPMG) show a composition bias toward pro residues. Residues 192–203 (SLSSEENKEEKS) are compositionally biased toward basic and acidic residues. A compositionally biased stretch (polar residues) spans 206-219 (APENQTIPGFQPSS).

It belongs to the SRA1 family. SRA1 RNA exists in a ribonucleoprotein complex containing NCOA1. The RNA also forms a complex with PUS1 and RARG in the nucleus. Interacts with AR. Expressed in various prostate cancer cell lines.

Its subcellular location is the nucleus. It localises to the cytoplasm. Functional RNA which acts as a transcriptional coactivator that selectively enhances steroid receptor-mediated transactivation ligand-independently through a mechanism involving the modulating N-terminal domain (AF-1) of steroid receptors. Also mediates transcriptional coactivation of steroid receptors ligand-dependently through the steroid-binding domain (AF-2). Enhances cellular proliferation and differentiation and promotes apoptosis in vivo. May play a role in tumorigenesis. The protein is Steroid receptor RNA activator 1 of Rattus norvegicus (Rat).